A 451-amino-acid chain; its full sequence is ADP-specific phosphofructokinase (451 aa).

Residues 1–450 form the ADPK domain; that stretch reads MSVPQDVSIF…FITYVNYLKR (450 aa). Mg(2+) is bound by residues glutamate 261, glutamate 291, and aspartate 434. Aspartate 434 (proton acceptor) is an active-site residue.

The protein belongs to the carbohydrate kinase PfkC family. The cofactor is Mg(2+).

The protein resides in the cytoplasm. It carries out the reaction beta-D-fructose 6-phosphate + ADP = beta-D-fructose 1,6-bisphosphate + AMP + H(+). The protein operates within carbohydrate degradation; glycolysis. Its function is as follows. Catalyzes the phosphorylation of fructose 6-phosphate to fructose 1,6-bisphosphate using ADP as the phosphate donor. The sequence is that of ADP-specific phosphofructokinase from Pyrococcus abyssi (strain GE5 / Orsay).